The primary structure comprises 256 residues: Thiazole synthase (256 aa).

Lysine 98 serves as the catalytic Schiff-base intermediate with DXP. 1-deoxy-D-xylulose 5-phosphate-binding positions include glycine 159, 185–186, and 207–208; these read AG and NT.

Belongs to the ThiG family. Homotetramer. Forms heterodimers with either ThiH or ThiS.

It is found in the cytoplasm. It carries out the reaction [ThiS sulfur-carrier protein]-C-terminal-Gly-aminoethanethioate + 2-iminoacetate + 1-deoxy-D-xylulose 5-phosphate = [ThiS sulfur-carrier protein]-C-terminal Gly-Gly + 2-[(2R,5Z)-2-carboxy-4-methylthiazol-5(2H)-ylidene]ethyl phosphate + 2 H2O + H(+). Its pathway is cofactor biosynthesis; thiamine diphosphate biosynthesis. In terms of biological role, catalyzes the rearrangement of 1-deoxy-D-xylulose 5-phosphate (DXP) to produce the thiazole phosphate moiety of thiamine. Sulfur is provided by the thiocarboxylate moiety of the carrier protein ThiS. In vitro, sulfur can be provided by H(2)S. The sequence is that of Thiazole synthase from Aliivibrio salmonicida (strain LFI1238) (Vibrio salmonicida (strain LFI1238)).